A 414-amino-acid polypeptide reads, in one-letter code: Methylthioribose-1-phosphate isomerase (414 aa).

The segment covering 205-215 (SQSQGSENPPS) has biased composition (polar residues). Positions 205–224 (SQSQGSENPPSKKQKKDAAP) are disordered. Aspartate 283 (proton donor) is an active-site residue.

This sequence belongs to the eIF-2B alpha/beta/delta subunits family. MtnA subfamily.

It is found in the cytoplasm. It localises to the nucleus. The catalysed reaction is 5-(methylsulfanyl)-alpha-D-ribose 1-phosphate = 5-(methylsulfanyl)-D-ribulose 1-phosphate. Its pathway is amino-acid biosynthesis; L-methionine biosynthesis via salvage pathway; L-methionine from S-methyl-5-thio-alpha-D-ribose 1-phosphate: step 1/6. In terms of biological role, catalyzes the interconversion of methylthioribose-1-phosphate (MTR-1-P) into methylthioribulose-1-phosphate (MTRu-1-P). The polypeptide is Methylthioribose-1-phosphate isomerase (Zygosaccharomyces rouxii (strain ATCC 2623 / CBS 732 / NBRC 1130 / NCYC 568 / NRRL Y-229)).